Reading from the N-terminus, the 226-residue chain is RLA class II histocompatibility antigen, DP alpha-1 chain (226 aa).

Topologically, residues 1–189 (EHVSVFVIFA…PIQMPETTET (189 aa)) are extracellular. 2 N-linked (GlcNAc...) asparagine glycosylation sites follow: Asn-75 and Asn-115. The Ig-like C1-type domain maps to 84–176 (PEVIVFPKEP…LDAPLLTHWE (93 aa)). Cys-104 and Cys-160 are oxidised to a cystine. A helical membrane pass occupies residues 190–210 (VVCALGLVVGLAGVVVGIVLI). Residues 211–226 (TKALRSSPDPRARRPL) lie on the Cytoplasmic side of the membrane.

It belongs to the MHC class II family.

It is found in the membrane. The protein is RLA class II histocompatibility antigen, DP alpha-1 chain of Oryctolagus cuniculus (Rabbit).